The primary structure comprises 291 residues: MLKDIFSKKKKKYASVPAESAKQDVPEGIMTKCPDCKKIMLTKELDKNLRVCMNCGYHLQMNAKQRIKSLLDDGSFEEFNQDMMSENPLEFPGYLEKLQKDREKTSLNEAVVTGKGTIDGSPAVVAVMDSSFRMGSMGSVVGEKITLAIEKAREEKVPFIIFTASGGARMQEGLLSLMQMAKTSSALKLFSEEQGLIISVMTHPTTGGVSASFASLGDYNLAEPGALIGFAGRRIIEQTIREELPEDFQTAEFLLKHGQLDSVVHRADMKKTLGSILKMHQTGGDLEWLEN.

A CoA carboxyltransferase N-terminal domain is found at 29-291 (IMTKCPDCKK…TGGDLEWLEN (263 aa)). The Zn(2+) site is built by Cys-33, Cys-36, Cys-52, and Cys-55. The segment at 33 to 55 (CPDCKKIMLTKELDKNLRVCMNC) adopts a C4-type zinc-finger fold.

It belongs to the AccD/PCCB family. As to quaternary structure, acetyl-CoA carboxylase is a heterohexamer composed of biotin carboxyl carrier protein (AccB), biotin carboxylase (AccC) and two subunits each of ACCase subunit alpha (AccA) and ACCase subunit beta (AccD). Zn(2+) is required as a cofactor.

It localises to the cytoplasm. The enzyme catalyses N(6)-carboxybiotinyl-L-lysyl-[protein] + acetyl-CoA = N(6)-biotinyl-L-lysyl-[protein] + malonyl-CoA. It participates in lipid metabolism; malonyl-CoA biosynthesis; malonyl-CoA from acetyl-CoA: step 1/1. Component of the acetyl coenzyme A carboxylase (ACC) complex. Biotin carboxylase (BC) catalyzes the carboxylation of biotin on its carrier protein (BCCP) and then the CO(2) group is transferred by the transcarboxylase to acetyl-CoA to form malonyl-CoA. This chain is Acetyl-coenzyme A carboxylase carboxyl transferase subunit beta, found in Bacillus licheniformis (strain ATCC 14580 / DSM 13 / JCM 2505 / CCUG 7422 / NBRC 12200 / NCIMB 9375 / NCTC 10341 / NRRL NRS-1264 / Gibson 46).